Here is a 932-residue protein sequence, read N- to C-terminus: DNA mismatch repair protein MutS (932 aa).

615–622 contacts ATP; it reads GPNMAGKS.

Belongs to the DNA mismatch repair MutS family.

Its function is as follows. This protein is involved in the repair of mismatches in DNA. It is possible that it carries out the mismatch recognition step. This protein has a weak ATPase activity. In Clostridium botulinum (strain Kyoto / Type A2), this protein is DNA mismatch repair protein MutS.